A 505-amino-acid polypeptide reads, in one-letter code: Cytochrome P450 CYP71D313 (505 aa).

Residues M1–F21 traverse the membrane as a helical segment. C441 is a binding site for heme. The helical transmembrane segment at P442–F462 threads the bilayer.

It belongs to the cytochrome P450 family. The cofactor is heme.

Its subcellular location is the membrane. Probable heme-thiolate monooxygenase. This is Cytochrome P450 CYP71D313 from Panax ginseng (Korean ginseng).